A 316-amino-acid polypeptide reads, in one-letter code: Zinc finger protein 367 (316 aa).

The segment at 61–97 is disordered; sequence VTLGPGSGSGAASPTRTSSSPAEADPLSCPEHLKDGI. Low complexity predominate over residues 70–82; the sequence is GAASPTRTSSSPA. C2H2-type zinc fingers lie at residues 121 to 143 and 149 to 173; these read IRCN…KRTH and YLCD…QRLH. The tract at residues 234–294 is disordered; that stretch reads QTREQRSPVP…GGVVTARRRL (61 aa). The span at 255–278 shows a compositional bias: acidic residues; sequence EDQEQQDPLDFLPSDEGEEEEQEE. The stretch at 289 to 313 forms a coiled coil; it reads TARRRLQEQRERLHGALALIELANN.

Belongs to the krueppel C2H2-type zinc-finger protein family.

It localises to the nucleus. Its function is as follows. Transcriptional activator. This Danio rerio (Zebrafish) protein is Zinc finger protein 367 (znf367).